We begin with the raw amino-acid sequence, 460 residues long: Serine/threonine-protein kinase cds1 (460 aa).

Residues 60 to 116 (WRFGRHKSCEVVLNGPRVSNFHFEIYQGHRNDSDESENVVFLHDHSSNGTFLNFERL) form the FHA domain. Residues 167 to 433 (YEIIRTLGSG…ESEALQHPWF (267 aa)) enclose the Protein kinase domain. ATP contacts are provided by residues 173–181 (LGSGTFAVV) and lysine 196. Aspartate 294 functions as the Proton acceptor in the catalytic mechanism. The span at 438 to 453 (THEHRTPPSSSEHEAT) shows a compositional bias: basic and acidic residues. The disordered stretch occupies residues 438-460 (THEHRTPPSSSEHEATEQLNSSS). At threonine 443 the chain carries Phosphothreonine.

The protein belongs to the protein kinase superfamily. CAMK Ser/Thr protein kinase family. CHEK2 subfamily. As to quaternary structure, interacts with rad26. Autophosphorylated.

The enzyme catalyses L-seryl-[protein] + ATP = O-phospho-L-seryl-[protein] + ADP + H(+). It catalyses the reaction L-threonyl-[protein] + ATP = O-phospho-L-threonyl-[protein] + ADP + H(+). In terms of biological role, has a role in the DNA replication-monitoring S/G2 checkpoint system. It is responsible for blocking mitosis in the S phase. It monitors DNA synthesis by interacting with DNA polymerase alpha and sends a signal to block the onset of mitosis while DNA synthesis is in progress. Phosphorylates rad60 and dna2. This Schizosaccharomyces pombe (strain 972 / ATCC 24843) (Fission yeast) protein is Serine/threonine-protein kinase cds1 (cds1).